Consider the following 199-residue polypeptide: Calcium-binding protein CAST (199 aa).

The segment covering 1–13 has biased composition (basic and acidic residues); that stretch reads MGSVQDENKDEFK. A disordered region spans residues 1-31; the sequence is MGSVQDENKDEFKQSLTRGKLKPSSSSSFRL. 4 consecutive EF-hand domains span residues 36 to 71, 75 to 110, 125 to 160, and 163 to 198; these read LNSIRLRRIFDVFDRNHDCLISVEELSQALNLLGLD, SEIESMVKLHIKPENTGLRFEDFETLHRSLNDVFFG, QDESDLKEAFDVFDENGDGFISAKELQVVLEKLGLP, and SEIDRVEMMISSVEQDHDGRVDFFEFKDMMRTVIVP. The Ca(2+) site is built by Asp49, Asn51, Asp53, and Glu60. Residues Asp138, Asn140, Asp142, Glu149, Asp178, Asp180, Arg182, and Glu187 each contribute to the Ca(2+) site.

Functionally, not known. Probably binds 3 calcium ions. The protein is Calcium-binding protein CAST of Solanum tuberosum (Potato).